A 252-amino-acid polypeptide reads, in one-letter code: Small ribosomal subunit protein uS3 (252 aa).

The region spanning 39–109 is the KH type-2 domain; the sequence is IRNYVNTRLK…EVKIDVVEVV (71 aa). Positions 222 to 240 are enriched in basic and acidic residues; that stretch reads MKKIRDRRNDQRSRGGRDS. Positions 222–252 are disordered; it reads MKKIRDRRNDQRSRGGRDSRNKRRRRPKNTA. Basic residues predominate over residues 241 to 252; that stretch reads RNKRRRRPKNTA.

This sequence belongs to the universal ribosomal protein uS3 family. As to quaternary structure, part of the 30S ribosomal subunit. Forms a tight complex with proteins S10 and S14.

In terms of biological role, binds the lower part of the 30S subunit head. Binds mRNA in the 70S ribosome, positioning it for translation. The sequence is that of Small ribosomal subunit protein uS3 from Chlorobium phaeobacteroides (strain BS1).